The following is a 219-amino-acid chain: Octanoyltransferase (219 aa).

The region spanning 34 to 209 (SESPDELWIV…TFSQLLGYQH (176 aa)) is the BPL/LPL catalytic domain. Substrate is bound by residues 73–80 (RGGQVTYH), 140–142 (SLG), and 153–155 (GLA). Cysteine 171 serves as the catalytic Acyl-thioester intermediate.

It belongs to the LipB family.

It localises to the cytoplasm. The enzyme catalyses octanoyl-[ACP] + L-lysyl-[protein] = N(6)-octanoyl-L-lysyl-[protein] + holo-[ACP] + H(+). The protein operates within protein modification; protein lipoylation via endogenous pathway; protein N(6)-(lipoyl)lysine from octanoyl-[acyl-carrier-protein]: step 1/2. Functionally, catalyzes the transfer of endogenously produced octanoic acid from octanoyl-acyl-carrier-protein onto the lipoyl domains of lipoate-dependent enzymes. Lipoyl-ACP can also act as a substrate although octanoyl-ACP is likely to be the physiological substrate. The sequence is that of Octanoyltransferase from Shewanella putrefaciens (strain CN-32 / ATCC BAA-453).